The chain runs to 208 residues: Uracil phosphoribosyltransferase (208 aa).

Residues arginine 78, arginine 103, and 130–138 (DPMLATGGS) contribute to the 5-phospho-alpha-D-ribose 1-diphosphate site. Uracil is bound by residues isoleucine 193 and 198-200 (GDA). Aspartate 199 is a 5-phospho-alpha-D-ribose 1-diphosphate binding site.

It belongs to the UPRTase family. It depends on Mg(2+) as a cofactor.

The enzyme catalyses UMP + diphosphate = 5-phospho-alpha-D-ribose 1-diphosphate + uracil. Its pathway is pyrimidine metabolism; UMP biosynthesis via salvage pathway; UMP from uracil: step 1/1. Allosterically activated by GTP. Functionally, catalyzes the conversion of uracil and 5-phospho-alpha-D-ribose 1-diphosphate (PRPP) to UMP and diphosphate. The chain is Uracil phosphoribosyltransferase from Haemophilus ducreyi (strain 35000HP / ATCC 700724).